The primary structure comprises 73 residues: Large ribosomal subunit protein bL31 (73 aa).

This sequence belongs to the bacterial ribosomal protein bL31 family. Type A subfamily. Part of the 50S ribosomal subunit.

Functionally, binds the 23S rRNA. This Ruegeria sp. (strain TM1040) (Silicibacter sp.) protein is Large ribosomal subunit protein bL31.